We begin with the raw amino-acid sequence, 194 residues long: Inosine triphosphate pyrophosphatase (194 aa).

An ITP-binding site is contributed by 10–15 (TTNLKK). Position 36 (E36) interacts with Mg(2+). Residues K48, 66–67 (DT), K83, K166, and 171–172 (HR) each bind ITP.

The protein belongs to the HAM1 NTPase family. Homodimer. It depends on Mg(2+) as a cofactor. Requires Mn(2+) as cofactor.

Its subcellular location is the cytoplasm. It is found in the nucleus. The catalysed reaction is ITP + H2O = IMP + diphosphate + H(+). The enzyme catalyses dITP + H2O = dIMP + diphosphate + H(+). It catalyses the reaction XTP + H2O = XMP + diphosphate + H(+). Its function is as follows. Pyrophosphatase that hydrolyzes non-canonical purine nucleotides such as inosine triphosphate (ITP), deoxyinosine triphosphate (dITP) or xanthosine 5'-triphosphate (XTP) to their respective monophosphate derivatives. The enzyme does not distinguish between the deoxy- and ribose forms. Probably excludes non-canonical purines from RNA and DNA precursor pools, thus preventing their incorporation into RNA and DNA and avoiding chromosomal lesions. The protein is Inosine triphosphate pyrophosphatase of Encephalitozoon intestinalis (strain ATCC 50506) (Microsporidian parasite).